Reading from the N-terminus, the 535-residue chain is Large neutral amino acids transporter small subunit 2 (535 aa).

Positions 1 to 17 (MEEGARHRNNTEKKHPG) are enriched in basic and acidic residues. The tract at residues 1 to 30 (MEEGARHRNNTEKKHPGGGESDASPEAGSG) is disordered. Topologically, residues 1–44 (MEEGARHRNNTEKKHPGGGESDASPEAGSGGGGVALKKEIGLVS) are cytoplasmic. Ser-29 is modified (phosphoserine). The chain crosses the membrane as a helical span at residues 45–65 (ACGIIVGNIIGSGIFVSPKGV). Residue Ile-53 participates in L-leucine binding. Residues 66–73 (LENAGSVG) lie on the Extracellular side of the membrane. Residues 74–95 (LALIVWIVTGFITVVGALCYAE) traverse the membrane as a helical segment. At 96 to 116 (LGVTIPKSGGDYSYVKDIFGG) the chain is on the cytoplasmic side. A helical transmembrane segment spans residues 117–149 (LAGFLRLWIAVLVIYPTNQAVIALTFSNYVLQP). Asn-134 is a binding site for L-tryptophan. Residues 150–157 (LFPTCFPP) lie on the Extracellular side of the membrane. Residues 158–178 (ESGLRLLAAICLLLLTWVNCS) form a helical membrane-spanning segment. The Cytoplasmic portion of the chain corresponds to 179 to 181 (SVR). A helical membrane pass occupies residues 182-210 (WATRVQDIFTAGKLLALALIIIMGIVQIC). Over 211 to 230 (KGEYFWLEPKNAFENFQEPD) the chain is Extracellular. Residues 231–252 (IGLVALAFLQGSFAYGGWNFLN) form a helical membrane-spanning segment. Gly-246 provides a ligand contact to L-leucine. Topologically, residues 253–265 (YVTEELVDPYKNL) are cytoplasmic. The helical transmembrane segment at 266–287 (PRAIFISIPLVTFVYVFANVAY) threads the bilayer. The Extracellular portion of the chain corresponds to 288 to 312 (VTAMSPQELLASNAVAVTFGEKLLG). The chain crosses the membrane as a helical span at residues 313–338 (VMAWIMPISVALSTFGGVNGSLFTSS). Residues 339-364 (RLFFAGAREGHLPSVLAMIHVKRCTP) lie on the Cytoplasmic side of the membrane. A helical membrane pass occupies residues 365–382 (IPALLFTCISTLLMLVTS). The Extracellular portion of the chain corresponds to 383-386 (DMYT). Residues 387-408 (LINYVGFINYLFYGVTVAGQIV) traverse the membrane as a helical segment. Asn-395 lines the L-tryptophan pocket. The Cytoplasmic segment spans residues 409 to 423 (LRWKKPDIPRPIKIN). 2 consecutive transmembrane segments (helical) span residues 424 to 446 (LLFP…WSEP) and 447 to 466 (VVCG…YFLG). Residues 467-535 (VYWQHKPKCF…DKDVAGQPQP (69 aa)) are Cytoplasmic-facing. Residues 502-535 (SGTEEANEDMEEQQQPMYQPTPTKDKDVAGQPQP) are disordered. A compositionally biased stretch (polar residues) spans 514-523 (QQQPMYQPTP).

This sequence belongs to the amino acid-polyamine-organocation (APC) superfamily. L-type amino acid transporter (LAT) (TC 2.A.3.8) family. Disulfide-linked heterodimer composed of the catalytic light chain subunit SLC7A8 and the heavy chain subunit SLC3A2. SLC3A2 acts as chaperones for correct plasma membrane trafficking and stabilization of SLC7A8 and modulates the substrate affinity and specificity of SLC7A8. ICAM-1 associates with the heterodimer SLC3A2/SLC7A8; this interaction regulates SLC7A8 activity. In terms of tissue distribution, strongest expression is observed in kidney and moderate expression in placenta and brain, followed by liver, prostate, testis, ovary, lymph node, thymus, spleen, skeletal muscle and heart. Also expressed in fetal liver as well as in the retinal pigment epithelial cell line ARPE-19 and the intestinal epithelial cell line Caco-2.

It is found in the cell membrane. The protein localises to the basolateral cell membrane. It carries out the reaction L-histidine(in) + L-phenylalanine(out) = L-histidine(out) + L-phenylalanine(in). It catalyses the reaction L-tryptophan(in) + L-phenylalanine(out) = L-tryptophan(out) + L-phenylalanine(in). The enzyme catalyses L-isoleucine(in) + L-phenylalanine(out) = L-isoleucine(out) + L-phenylalanine(in). The catalysed reaction is L-valine(in) + L-phenylalanine(out) = L-valine(out) + L-phenylalanine(in). It carries out the reaction L-leucine(in) + L-phenylalanine(out) = L-leucine(out) + L-phenylalanine(in). It catalyses the reaction L-glutamine(in) + L-phenylalanine(out) = L-glutamine(out) + L-phenylalanine(in). The enzyme catalyses L-cysteine(in) + L-phenylalanine(out) = L-cysteine(out) + L-phenylalanine(in). The catalysed reaction is L-phenylalanine(out) + L-methionine(in) = L-phenylalanine(in) + L-methionine(out). It carries out the reaction L-leucine(out) + L-methionine(in) = L-leucine(in) + L-methionine(out). It catalyses the reaction L-cysteine(out) + L-methionine(in) = L-cysteine(in) + L-methionine(out). The enzyme catalyses S-methylmercury-L-cysteine(out) + L-methionine(in) = S-methylmercury-L-cysteine(in) + L-methionine(out). The catalysed reaction is S-methylmercury-L-cysteine(in) + L-leucine(out) = S-methylmercury-L-cysteine(out) + L-leucine(in). It carries out the reaction S-methylmercury-L-cysteine(in) + L-phenylalanine(out) = S-methylmercury-L-cysteine(out) + L-phenylalanine(in). It catalyses the reaction L-phenylalanine(out) + L-serine(in) = L-phenylalanine(in) + L-serine(out). The enzyme catalyses L-phenylalanine(out) + glycine(in) = L-phenylalanine(in) + glycine(out). The catalysed reaction is L-phenylalanine(out) + L-alanine(in) = L-phenylalanine(in) + L-alanine(out). It carries out the reaction 3,3'-diiodo-L-thyronine(out) = 3,3'-diiodo-L-thyronine(in). It catalyses the reaction 3,3',5-triiodo-L-thyronine(out) = 3,3',5-triiodo-L-thyronine(in). The enzyme catalyses L-dopa(out) + L-phenylalanine(in) = L-dopa(in) + L-phenylalanine(out). With respect to regulation, inhibited by the L-type inhibitor 2-Aminobicyclo-(2,2,1)-heptane-2-carboxylic acid (BCH). In terms of biological role, associates with SLC3A2 to form a functional heterodimeric complex that translocates small and large neutral amino acids with broad specificity and a stoichiometry of 1:1. Functions as amino acid antiporter mediating the influx of extracellular essential amino acids mainly in exchange with the efflux of highly concentrated intracellular amino acids. Has relatively symmetrical selectivities but strongly asymmetrical substrate affinities at both the intracellular and extracellular sides of the transporter. This asymmetry allows SLC7A8 to regulate intracellular amino acid pools (mM concentrations) by exchange with external amino acids (uM concentration range), equilibrating the relative concentrations of different amino acids across the plasma membrane instead of mediating their net uptake. May play an essential role in the reabsorption of neutral amino acids from the epithelial cells to the bloodstream in the kidney. Involved in the uptake of methylmercury (MeHg) when administered as the L-cysteine or D,L-homocysteine complexes, and hence plays a role in metal ion homeostasis and toxicity. Involved in the cellular activity of small molecular weight nitrosothiols, via the stereoselective transport of L-nitrosocysteine (L-CNSO) across the transmembrane. Imports the thyroid hormone diiodothyronine (T2) and to a smaller extent triiodothyronine (T3) but not rT 3 or thyroxine (T4). Mediates the uptake of L-DOPA. May participate in auditory function. The protein is Large neutral amino acids transporter small subunit 2 of Homo sapiens (Human).